The following is a 274-amino-acid chain: MAIHLYKTSTPSTRNGAVDSQVKSNPRNNLICGQHHCGKGRNARGIITARHRGGGHKRLYRKIDFRRNAKDIYGRIVTIEYDPNRNAYICLIHYGDGEKRYILHPRGAIIGDTIVSGTEVPIKMGNALPLTDMPLGTAIHNIEITLGRGGQLARAAGAVAKLIAKEGKSATLKLPSGEVRLISKNCSATVGQVGNVGVNQKSLGRAGSKCWLGKRPVVRGVVMNPVDHPHGGGEGRAPIGRKKPVTPWGYPALGRRTRKRKKYSETLILRRRSK.

2 disordered regions span residues 1–21 and 225–274; these read MAIH…VDSQ and PVDH…RRSK.

It belongs to the universal ribosomal protein uL2 family. In terms of assembly, part of the 50S ribosomal subunit.

The protein localises to the plastid. It is found in the chloroplast. In Arabidopsis thaliana (Mouse-ear cress), this protein is Large ribosomal subunit protein uL2cz/uL2cy (rpl2-A).